The following is a 162-amino-acid chain: Peptide deformylase-like (162 aa).

It belongs to the polypeptide deformylase family.

The protein is Peptide deformylase-like of Staphylococcus aureus (strain COL).